The sequence spans 367 residues: DNA replication and repair protein RecF (367 aa).

30-37 (GANGSGKT) provides a ligand contact to ATP.

It belongs to the RecF family.

It localises to the cytoplasm. The RecF protein is involved in DNA metabolism; it is required for DNA replication and normal SOS inducibility. RecF binds preferentially to single-stranded, linear DNA. It also seems to bind ATP. The chain is DNA replication and repair protein RecF from Pseudomonas putida (strain W619).